Here is a 491-residue protein sequence, read N- to C-terminus: Probable folate-biopterin transporter 4 (491 aa).

The next 6 membrane-spanning stretches (helical) occupy residues Val-14 to Trp-34, Ser-52 to Ile-72, Thr-84 to Asp-104, Leu-112 to Ile-132, Val-154 to Leu-174, and Ile-179 to Leu-199. The tract at residues Lys-222–Gln-262 is disordered. Polar residues predominate over residues Leu-224–Ser-236. Over residues Asn-237–Lys-248 the composition is skewed to basic residues. Residues Lys-249 to Lys-260 are compositionally biased toward basic and acidic residues. 6 consecutive transmembrane segments (helical) span residues Met-294–Tyr-314, Ala-323–Ile-343, Ser-356–Ser-376, Met-389–Leu-411, Thr-437–Phe-457, and Phe-461–Ile-481.

It belongs to the major facilitator superfamily. Folate-biopterin transporter (TC 2.A.71) family.

Its subcellular location is the membrane. Could mediate folate transport. The polypeptide is Probable folate-biopterin transporter 4 (Arabidopsis thaliana (Mouse-ear cress)).